The primary structure comprises 126 residues: E3 ubiquitin-protein ligase PPP1R11 (126 aa).

The segment at 1 to 25 is disordered; sequence MAEAGAGLSETVTETTVTVTTEPEN. Alanine 2 is modified (N-acetylalanine). Over residues 10–22 the composition is skewed to low complexity; that stretch reads ETVTETTVTVTTE. Positions 52–62 are atypical RING finger domain 1; that stretch reads HMGRRSSKCCC. The disordered stretch occupies residues 70–126; that stretch reads FGESSTESDEEEEEGCGHTHCVRGHRKGRRRATLGPTPTTPPQPPDPSQPPPGPMQH. Phosphoserine is present on residues serine 73 and serine 74. Phosphothreonine is present on threonine 75. Residue serine 77 is modified to Phosphoserine. Positions 85–94 are atypical RING finger domain 2; sequence CGHTHCVRGH. Basic residues predominate over residues 89 to 101; sequence HCVRGHRKGRRRA. Residues 107–126 show a composition bias toward pro residues; the sequence is PTTPPQPPDPSQPPPGPMQH. Threonine 109 bears the Phosphothreonine mark.

Interacts with TLR2 and UBE2D2. In terms of processing, auto-ubiquitinated. Widely expressed.

The enzyme catalyses S-ubiquitinyl-[E2 ubiquitin-conjugating enzyme]-L-cysteine + [acceptor protein]-L-lysine = [E2 ubiquitin-conjugating enzyme]-L-cysteine + N(6)-ubiquitinyl-[acceptor protein]-L-lysine.. The protein operates within protein modification; protein ubiquitination. Atypical E3 ubiquitin-protein ligase which ubiquitinates TLR2 at 'Lys-754' leading to its degradation by the proteasome. Plays a role in regulating inflammatory cytokine release and gram-positive bacterial clearance by functioning, in part, through the ubiquitination and degradation of TLR2. Inhibitor of protein phosphatase 1. The sequence is that of E3 ubiquitin-protein ligase PPP1R11 (PPP1R11) from Homo sapiens (Human).